We begin with the raw amino-acid sequence, 84 residues long: Magnetosome protein MamG (84 aa).

Residues 1-3 lie on the Cytoplasmic side of the membrane; sequence MIK. A helical membrane pass occupies residues 4-24; it reads GIAGVGGTALGVGGGVAAPPV. Residues 25–40 are Lumenal-facing; that stretch reads SAAAVGSTLLAGKGVC. The segment at 41–48 is LG repeat; the sequence is LGLGLGLG. The helical transmembrane segment at 41–61 threads the bilayer; sequence LGLGLGLGAWGPVLLGVAGLA. At 62–84 the chain is on the cytoplasmic side; sequence CAASLCDYLKNRKAQAEASAEPA.

Belongs to the magnetosome MamG (TC 9.B.95) protein family.

Its subcellular location is the magnetosome membrane. Its function is as follows. Plays a role in regulating magnetite crystal size. This is Magnetosome protein MamG from Magnetospirillum gryphiswaldense (strain DSM 6361 / JCM 21280 / NBRC 15271 / MSR-1).